Here is a 160-residue protein sequence, read N- to C-terminus: Phosphopantetheine adenylyltransferase (160 aa).

Ser-10 provides a ligand contact to substrate. ATP-binding positions include 10 to 11 (SF) and His-18. Residues Lys-42, Thr-74, and Arg-88 each contribute to the substrate site. ATP contacts are provided by residues 89 to 91 (GLR), Glu-99, and 124 to 130 (YSFISST).

This sequence belongs to the bacterial CoaD family. As to quaternary structure, homohexamer. It depends on Mg(2+) as a cofactor.

Its subcellular location is the cytoplasm. It carries out the reaction (R)-4'-phosphopantetheine + ATP + H(+) = 3'-dephospho-CoA + diphosphate. It participates in cofactor biosynthesis; coenzyme A biosynthesis; CoA from (R)-pantothenate: step 4/5. Reversibly transfers an adenylyl group from ATP to 4'-phosphopantetheine, yielding dephospho-CoA (dPCoA) and pyrophosphate. The polypeptide is Phosphopantetheine adenylyltransferase (Leptospira interrogans serogroup Icterohaemorrhagiae serovar copenhageni (strain Fiocruz L1-130)).